Consider the following 342-residue polypeptide: Flagellar P-ring protein (342 aa).

The N-terminal stretch at 1–19 (MKRVFLWLIFVLAFHKLLA) is a signal peptide.

Belongs to the FlgI family. As to quaternary structure, the basal body constitutes a major portion of the flagellar organelle and consists of four rings (L,P,S, and M) mounted on a central rod.

Its subcellular location is the periplasm. The protein resides in the bacterial flagellum basal body. Its function is as follows. Assembles around the rod to form the L-ring and probably protects the motor/basal body from shearing forces during rotation. This is Flagellar P-ring protein from Helicobacter pylori (strain G27).